Reading from the N-terminus, the 149-residue chain is Nucleoside diphosphate kinase (149 aa).

6 residues coordinate ATP: K9, F57, R85, T91, R102, and N112. H115 serves as the catalytic Pros-phosphohistidine intermediate.

The protein belongs to the NDK family. In terms of assembly, homotetramer. Requires Mg(2+) as cofactor.

It is found in the cytoplasm. The enzyme catalyses a 2'-deoxyribonucleoside 5'-diphosphate + ATP = a 2'-deoxyribonucleoside 5'-triphosphate + ADP. It carries out the reaction a ribonucleoside 5'-diphosphate + ATP = a ribonucleoside 5'-triphosphate + ADP. In terms of biological role, major role in the synthesis of nucleoside triphosphates other than ATP. The ATP gamma phosphate is transferred to the NDP beta phosphate via a ping-pong mechanism, using a phosphorylated active-site intermediate. The chain is Nucleoside diphosphate kinase from Roseiflexus sp. (strain RS-1).